The following is a 117-amino-acid chain: Large ribosomal subunit protein bL20c (117 aa).

The protein belongs to the bacterial ribosomal protein bL20 family.

The protein localises to the plastid. It localises to the chloroplast. Functionally, binds directly to 23S ribosomal RNA and is necessary for the in vitro assembly process of the 50S ribosomal subunit. It is not involved in the protein synthesizing functions of that subunit. This Buxus microphylla (Littleleaf boxwood) protein is Large ribosomal subunit protein bL20c.